The sequence spans 487 residues: Aspartyl/glutamyl-tRNA(Asn/Gln) amidotransferase subunit B (487 aa).

The protein belongs to the GatB/GatE family. GatB subfamily. Heterotrimer of A, B and C subunits.

The enzyme catalyses L-glutamyl-tRNA(Gln) + L-glutamine + ATP + H2O = L-glutaminyl-tRNA(Gln) + L-glutamate + ADP + phosphate + H(+). It carries out the reaction L-aspartyl-tRNA(Asn) + L-glutamine + ATP + H2O = L-asparaginyl-tRNA(Asn) + L-glutamate + ADP + phosphate + 2 H(+). Its function is as follows. Allows the formation of correctly charged Asn-tRNA(Asn) or Gln-tRNA(Gln) through the transamidation of misacylated Asp-tRNA(Asn) or Glu-tRNA(Gln) in organisms which lack either or both of asparaginyl-tRNA or glutaminyl-tRNA synthetases. The reaction takes place in the presence of glutamine and ATP through an activated phospho-Asp-tRNA(Asn) or phospho-Glu-tRNA(Gln). The chain is Aspartyl/glutamyl-tRNA(Asn/Gln) amidotransferase subunit B from Roseiflexus sp. (strain RS-1).